Reading from the N-terminus, the 308-residue chain is Type II restriction enzyme MamI (308 aa).

The catalysed reaction is Endonucleolytic cleavage of DNA to give specific double-stranded fragments with terminal 5'-phosphates.. A P subtype restriction enzyme that recognizes the double-stranded sequence 5'-GATNNNNATC-3' and cleaves after N-5. This Microbacterium ammoniaphilum protein is Type II restriction enzyme MamI.